The chain runs to 212 residues: Deoxyribose-phosphate aldolase (212 aa).

D89 (proton donor/acceptor) is an active-site residue. The active-site Schiff-base intermediate with acetaldehyde is K151. Catalysis depends on K180, which acts as the Proton donor/acceptor.

The protein belongs to the DeoC/FbaB aldolase family. DeoC type 1 subfamily.

Its subcellular location is the cytoplasm. It catalyses the reaction 2-deoxy-D-ribose 5-phosphate = D-glyceraldehyde 3-phosphate + acetaldehyde. It functions in the pathway carbohydrate degradation; 2-deoxy-D-ribose 1-phosphate degradation; D-glyceraldehyde 3-phosphate and acetaldehyde from 2-deoxy-alpha-D-ribose 1-phosphate: step 2/2. Catalyzes a reversible aldol reaction between acetaldehyde and D-glyceraldehyde 3-phosphate to generate 2-deoxy-D-ribose 5-phosphate. In Clostridium botulinum (strain Okra / Type B1), this protein is Deoxyribose-phosphate aldolase.